A 466-amino-acid chain; its full sequence is Cysteine--tRNA ligase (466 aa).

Cys-29 contributes to the Zn(2+) binding site. Residues 31–41 (PTVYNYIHIGN) carry the 'HIGH' region motif. Residues Cys-209, His-234, and Glu-238 each coordinate Zn(2+). The 'KMSKS' region signature appears at 266–270 (KMSKS). Lys-269 provides a ligand contact to ATP.

The protein belongs to the class-I aminoacyl-tRNA synthetase family. As to quaternary structure, monomer. Requires Zn(2+) as cofactor.

The protein resides in the cytoplasm. It carries out the reaction tRNA(Cys) + L-cysteine + ATP = L-cysteinyl-tRNA(Cys) + AMP + diphosphate. This chain is Cysteine--tRNA ligase, found in Lysinibacillus sphaericus (strain C3-41).